The primary structure comprises 127 residues: Large ribosomal subunit protein bL12 (127 aa).

This sequence belongs to the bacterial ribosomal protein bL12 family. In terms of assembly, homodimer. Part of the ribosomal stalk of the 50S ribosomal subunit. Forms a multimeric L10(L12)X complex, where L10 forms an elongated spine to which 2 to 4 L12 dimers bind in a sequential fashion. Binds GTP-bound translation factors.

Its function is as follows. Forms part of the ribosomal stalk which helps the ribosome interact with GTP-bound translation factors. Is thus essential for accurate translation. This chain is Large ribosomal subunit protein bL12, found in Syntrophotalea carbinolica (strain DSM 2380 / NBRC 103641 / GraBd1) (Pelobacter carbinolicus).